A 353-amino-acid chain; its full sequence is UPF0283 membrane protein YcjF (353 aa).

Residues 1 to 19 are compositionally biased toward basic and acidic residues; it reads MSEPLKPRIDFAEPLKEEP. Positions 1 to 35 are disordered; that stretch reads MSEPLKPRIDFAEPLKEEPTSAFKAQQTFSEAESR. The next 3 membrane-spanning stretches (helical) occupy residues 70-90, 100-120, and 213-233; these read MVMG…VQWT, VALG…GSVV, and ESTL…FIAW.

The protein belongs to the UPF0283 family.

Its subcellular location is the cell inner membrane. The polypeptide is UPF0283 membrane protein YcjF (Salmonella paratyphi C (strain RKS4594)).